The chain runs to 87 residues: Costars family protein (87 aa).

The protein belongs to the costars family.

This Oryza sativa subsp. indica (Rice) protein is Costars family protein.